The sequence spans 589 residues: MNEKNSDEINYDFKVDSNLNHTTSHLLAAAIVQLYPNVKLGFGPAIEEGFYYDFEFENPLSKLELLKIEKLMKKLASMNLKMVKVDGSNYDFTNKPYKKELYDELKQKGQEITFYSLVDTNGKEIFTDLCAGGHVESTSKINNFKLLSLAGAYWRGNSNNIQLTRIYGSSFYKKDELENYLKVIEDRKERDHRKIGKNLGIFTFSSLSGLGFPIWLKKGMLIKRAIEKEILYLDRKYGFEEVLSPHFGEESLYIKSGHLAHYQETMFKSLEVENEKLIPRPMTCPHHIIIYDAFPRSYRELPLRLSEQSRLYRYEKSGALTGLERVRTMDLTEGHIFIRQDQIKDEVLNMINLIQETLKIFKIKIDHVALSLRDNDKEKFFDDDQMWDQAESALKEILDQNKIDYIVEKGEAAFYGPKIDFQVKTVLNNIITMSTIQLDFLLPRKFNISYIAPDGSKQTPLMIHRGLIGTYERFVSILLEQTKGNFPFWLSPSQVIVLPIAKEFKEYAFEIYSKIFKQNFNVEIDNRDETINKKIREAQINKYKYQIIIGKQEMENKTIAIREYGKVQTITMDLESFIEKIKSQRDSKE.

The catalytic stretch occupies residues 191 to 487; the sequence is DHRKIGKNLG…LLEQTKGNFP (297 aa). Residues C284, H335, and H464 each coordinate Zn(2+).

Belongs to the class-II aminoacyl-tRNA synthetase family. Homodimer. Zn(2+) is required as a cofactor.

It is found in the cytoplasm. It catalyses the reaction tRNA(Thr) + L-threonine + ATP = L-threonyl-tRNA(Thr) + AMP + diphosphate + H(+). Its function is as follows. Catalyzes the attachment of threonine to tRNA(Thr) in a two-step reaction: L-threonine is first activated by ATP to form Thr-AMP and then transferred to the acceptor end of tRNA(Thr). Also edits incorrectly charged L-seryl-tRNA(Thr). This chain is Threonine--tRNA ligase, found in Mycoplasmopsis pulmonis (strain UAB CTIP) (Mycoplasma pulmonis).